The sequence spans 777 residues: Transcriptional regulator QRICH1 (777 aa).

Residue methionine 1 is modified to N-acetylmethionine. The 43-residue stretch at glutamate 6 to threonine 48 folds into the CARD domain. 2 disordered regions span residues isoleucine 140–glutamine 164 and alanine 219–alanine 240. Position 346 is a phosphoserine (serine 346). Glycyl lysine isopeptide (Lys-Gly) (interchain with G-Cter in SUMO2) cross-links involve residues lysine 354 and lysine 359. The disordered stretch occupies residues glutamine 420 to glutamine 440. Serine 465 is modified (phosphoserine).

As to expression, expressed highly in prefrontal cortex, craniofacial area and near the limbs of mouse embryos. Expressed in heart, skeletal muscle, liver, kidney, lung, brain, spleen, intestine and growth plate in mice.

Its subcellular location is the nucleus. The protein resides in the cytoplasm. It is found in the cell membrane. Transcriptional regulator that acts as a mediator of the integrated stress response (ISR) through transcriptional control of protein homeostasis under conditions of ER stress. Controls the outcome of the unfolded protein response (UPR), an ER-stress response pathway that either promotes recovery of ER homeostasis and cell survival, or triggers the terminal UPR which elicits programmed cell death when ER stress is prolonged and unresolved. ER stress induces QRICH1 translation by a ribosome translation re-initiation mechanism in response to EIF2S1/eIF-2-alpha phosphorylation, and stress-induced QRICH1 regulates a transcriptional program associated with protein translation, protein secretion-mediated proteotoxicity and cell death during the terminal UPR. May cooperate with ATF4 transcription factor signaling to regulate ER homeostasis which is critical for cell viability. Up-regulates CASP3/caspase-3 activity in epithelial cells under ER stress. Central regulator of proteotoxicity associated with ER stress-mediated inflammatory diseases in the intestines and liver. Involved in chondrocyte hypertrophy, a process required for normal longitudinal bone growth. This Mus musculus (Mouse) protein is Transcriptional regulator QRICH1.